Reading from the N-terminus, the 431-residue chain is uncharacterized protein (431 aa).

This is an uncharacterized protein from Caenorhabditis elegans.